A 301-amino-acid chain; its full sequence is UDP-N-acetylenolpyruvoylglucosamine reductase (301 aa).

An FAD-binding PCMH-type domain is found at arginine 27 to aspartate 194. The active site involves arginine 172. Serine 223 functions as the Proton donor in the catalytic mechanism. Glutamate 293 is an active-site residue.

It belongs to the MurB family. It depends on FAD as a cofactor.

The protein resides in the cytoplasm. The catalysed reaction is UDP-N-acetyl-alpha-D-muramate + NADP(+) = UDP-N-acetyl-3-O-(1-carboxyvinyl)-alpha-D-glucosamine + NADPH + H(+). It participates in cell wall biogenesis; peptidoglycan biosynthesis. Functionally, cell wall formation. The chain is UDP-N-acetylenolpyruvoylglucosamine reductase from Caulobacter vibrioides (strain NA1000 / CB15N) (Caulobacter crescentus).